The primary structure comprises 281 residues: Dexamethasone-induced Ras-related protein 1 (281 aa).

Residue C11 is modified to S-nitrosocysteine. GTP is bound at residue 31–38; it reads GSSKVGKT. The Effector region signature appears at 53–61; that stretch reads YTPTIEDFH. Residues 78–82 and 145–148 each bind GTP; these read DTSGN and NKGD. Position 278 is a cysteine methyl ester (C278). The S-farnesyl cysteine moiety is linked to residue C278. The propeptide at 279–281 is removed in mature form; the sequence is VIS.

It belongs to the small GTPase superfamily. RasD family. Forms a ternary complex with CAPON and NOS1. Component of a complex, at least composed of APBB1, RASD1/DEXRAS1 and APP. Interacts with APBB1/FE65. Post-translationally, S-nitrosylation stimulates guanine-nucleotide exchange activity. In terms of tissue distribution, expressed in a variety of tissues including heart, cardiovascular tissues, brain, placenta, lung, liver, skeletal muscle, kidney, pancreas, gastrointestinal and reproductive tissues.

The protein localises to the cell membrane. The protein resides in the cytoplasm. It is found in the perinuclear region. It localises to the nucleus. Its function is as follows. Small GTPase. Negatively regulates the transcription regulation activity of the APBB1/FE65-APP complex via its interaction with APBB1/FE65. This Homo sapiens (Human) protein is Dexamethasone-induced Ras-related protein 1 (RASD1).